The chain runs to 163 residues: MISFNLTSIVNLVGFLAFMFLMYRLLYKPYFDMTDKRKKEVEKNLNEAEKLRLEAQLKKEELDKQLSEADEKRREILSEADEQAKSIIKAAQGEAQEQRKFILDKAEKEAEEIKESAARELQSRIVSLAVTISSMILKEQIDKKKNEELIRRAINSLKDKGEL.

The chain crosses the membrane as a helical span at residues 1–21; it reads MISFNLTSIVNLVGFLAFMFL.

The protein belongs to the ATPase B chain family. In terms of assembly, F-type ATPases have 2 components, F(1) - the catalytic core - and F(0) - the membrane proton channel. F(1) has five subunits: alpha(3), beta(3), gamma(1), delta(1), epsilon(1). F(0) has three main subunits: a(1), b(2) and c(10-14). The alpha and beta chains form an alternating ring which encloses part of the gamma chain. F(1) is attached to F(0) by a central stalk formed by the gamma and epsilon chains, while a peripheral stalk is formed by the delta and b chains.

Its subcellular location is the cell inner membrane. Functionally, f(1)F(0) ATP synthase produces ATP from ADP in the presence of a proton or sodium gradient. F-type ATPases consist of two structural domains, F(1) containing the extramembraneous catalytic core and F(0) containing the membrane proton channel, linked together by a central stalk and a peripheral stalk. During catalysis, ATP synthesis in the catalytic domain of F(1) is coupled via a rotary mechanism of the central stalk subunits to proton translocation. Component of the F(0) channel, it forms part of the peripheral stalk, linking F(1) to F(0). In Petrotoga mobilis (strain DSM 10674 / SJ95), this protein is ATP synthase subunit b.